The following is a 178-amino-acid chain: MSRIGRLPIDVPAGVDVSVDGQHVTVKGPKGELSLTIAQPIRAEVQDGQVLVTRPDDERESRSLHGLTRSLIANNIVGVTTGYTKGLEIVGTGYRVALKDKGVEFALGFSHPVYVEAPAGISFTVEGVNKMTVVGIDKQLVGETAANIRKIRKPEPYKGKGVRYAGENVRRKAGKSGK.

Belongs to the universal ribosomal protein uL6 family. As to quaternary structure, part of the 50S ribosomal subunit.

Its function is as follows. This protein binds to the 23S rRNA, and is important in its secondary structure. It is located near the subunit interface in the base of the L7/L12 stalk, and near the tRNA binding site of the peptidyltransferase center. This chain is Large ribosomal subunit protein uL6, found in Clavibacter sepedonicus (Clavibacter michiganensis subsp. sepedonicus).